Reading from the N-terminus, the 101-residue chain is Small ribosomal subunit protein uS10 (101 aa).

It belongs to the universal ribosomal protein uS10 family. As to quaternary structure, part of the 30S ribosomal subunit.

Involved in the binding of tRNA to the ribosomes. The chain is Small ribosomal subunit protein uS10 from Saccharopolyspora erythraea (strain ATCC 11635 / DSM 40517 / JCM 4748 / NBRC 13426 / NCIMB 8594 / NRRL 2338).